Reading from the N-terminus, the 293-residue chain is ATP synthase gamma chain (293 aa).

This sequence belongs to the ATPase gamma chain family. In terms of assembly, F-type ATPases have 2 components, CF(1) - the catalytic core - and CF(0) - the membrane proton channel. CF(1) has five subunits: alpha(3), beta(3), gamma(1), delta(1), epsilon(1). CF(0) has three main subunits: a, b and c.

It localises to the cell inner membrane. Produces ATP from ADP in the presence of a proton gradient across the membrane. The gamma chain is believed to be important in regulating ATPase activity and the flow of protons through the CF(0) complex. The chain is ATP synthase gamma chain from Beijerinckia indica subsp. indica (strain ATCC 9039 / DSM 1715 / NCIMB 8712).